The sequence spans 165 residues: Transcription antitermination protein NusB (165 aa).

Residues 139 to 165 form a disordered region; the sequence is EAVRSHRRNKRPAADKPVATDKPAAAE.

This sequence belongs to the NusB family.

Involved in transcription antitermination. Required for transcription of ribosomal RNA (rRNA) genes. Binds specifically to the boxA antiterminator sequence of the ribosomal RNA (rrn) operons. This is Transcription antitermination protein NusB from Laribacter hongkongensis (strain HLHK9).